The sequence spans 473 residues: Proton-coupled folate transporter (473 aa).

The segment covering M1 to A20 has biased composition (pro residues). The disordered stretch occupies residues M1 to R21. The Cytoplasmic segment spans residues M1–V29. The helical transmembrane segment at E30–T48 threads the bilayer. At Q49 to V90 the chain is on the extracellular side. N-linked (GlcNAc...) asparagine glycans are attached at residues N65 and N74. Residues C72 and C306 are joined by a disulfide bond. Residues A91–S116 form a helical membrane-spanning segment. N98 is a pemetrexed binding site. Over D117–G120 the chain is Cytoplasmic. Residues R121–M143 traverse the membrane as a helical segment. At Y144–H148 the chain is on the extracellular side. Residues V149–L162 form a helical membrane-spanning segment. Over G163 to R185 the chain is Cytoplasmic. H(+) is bound by residues D164 and E193. A helical membrane pass occupies residues T186–R211. Pemetrexed is bound at residue E193. Residues K212 to Y216 lie on the Extracellular side of the membrane. A helical membrane pass occupies residues I217–A235. The Cytoplasmic portion of the chain corresponds to L236–K274. A helical membrane pass occupies residues L275–V297. Position 289 (H289) interacts with H(+). Residues L298–D310 lie on the Extracellular side of the membrane. Residues L311–L333 form a helical membrane-spanning segment. A pemetrexed-binding site is contributed by Y323. The Cytoplasmic portion of the chain corresponds to Q334–D339. The helical transmembrane segment at T340 to L359 threads the bilayer. The Extracellular portion of the chain corresponds to A360–T363. A helical transmembrane segment spans residues P364–R384. The Cytoplasmic portion of the chain corresponds to A385–Q396. The helical transmembrane segment at G397 to Y422 threads the bilayer. Pemetrexed-binding residues include E407 and S411. The Extracellular segment spans residues P423–R430. Residues G431–G449 traverse the membrane as a helical segment. Over W450–G473 the chain is Cytoplasmic.

It belongs to the major facilitator superfamily. SLC46A family. Monomer. As to expression, widely expressed, including brain, aorta, liver, kidney, spleen, small intestine, pancreas, ovary and testis.

Its subcellular location is the cell membrane. The protein localises to the apical cell membrane. It is found in the basolateral cell membrane. The protein resides in the endosome membrane. It localises to the cytoplasm. The catalysed reaction is folate(in) + H(+)(in) = folate(out) + H(+)(out). It catalyses the reaction (6S)-5-methyl-5,6,7,8-tetrahydrofolate(in) + H(+)(in) = (6S)-5-methyl-5,6,7,8-tetrahydrofolate(out) + H(+)(out). The enzyme catalyses methotrexate(in) + H(+)(in) = methotrexate(out) + H(+)(out). It carries out the reaction pemetrexed(in) + H(+)(in) = pemetrexed(out) + H(+)(out). In terms of biological role, proton-coupled folate symporter that mediates folate absorption using an H(+) gradient as a driving force. Involved in the intestinal absorption of folates at the brush-border membrane of the proximal jejunum, and the transport from blood to cerebrospinal fluid across the choroid plexus. Functions at acidic pH via alternate outward- and inward-open conformation states. Protonation of residues in the outward open state primes the protein for transport. Binding of folate promotes breaking of salt bridge network and subsequent closure of the extracellular gate, leading to the inward-open state and release of protons and folate. Also able to transport antifolate drugs, such as methotrexate and pemetrexed. Also acts as a lower-affinity, pH-independent heme carrier protein and constitutes the main importer of heme in the intestine. Imports heme in the retina and retinal pigment epithelium, in neurons of the hippocampus, in hepatocytes and in the renal epithelial cells. This Gallus gallus (Chicken) protein is Proton-coupled folate transporter.